Reading from the N-terminus, the 208-residue chain is HTLV-1 basic zipper factor (208 aa).

Residues 59 to 93 (RLRWGPVGEEAPPRGETHRDRQRRAEEKRKRKRER) form a disordered region. A compositionally biased stretch (basic and acidic residues) spans 69-86 (APPRGETHRDRQRRAEEK). 3 short sequence motifs (nuclear localization signal) span residues 86–91 (KRKRKR), 115–119 (RRRRA), and 136–140 (RRERK). A compositionally biased stretch (basic and acidic residues) spans 125–143 (DRARRKLEEEERRERKWRQ). Residues 125–160 (DRARRKLEEEERRERKWRQTEQGAKQRSARKEKMTE) are disordered.

It belongs to the HTLV-1 HBZ protein family. Interacts with host ATF4; this interaction inhibits viral RNA transcriptional activation by preventing ATF4 binding to Tax-responsive elements. Interacts with host CREB1; this interaction inhibits host CREB1 transcriptional activity. Interacts with host JUN, JUNB and JUND. Interacts with host EP300.

The protein resides in the host nucleus. Contributes to the regulation of viral RNA transcription by interacting with host proteins involved in transcriptional activation such as ATF4, or CREB1, and by inhibiting their activity. Additionally, HBZ suppresses host NF-kappa-B-driven transcription mediated by host RELA as well as transcription of some classical NF-kappa-B target genes, including IL8, IL2RA, IRF4, VCAM1, and VEGFA. This is HTLV-1 basic zipper factor (HBZ) from Human T-cell leukemia virus 1 (isolate Melanesia mel5 subtype C) (HTLV-1).